We begin with the raw amino-acid sequence, 2343 residues long: Coagulation factor VIII (2343 aa).

Positions 1–19 (MQVELYTCCFLCLLPFSLS) are cleaved as a signal peptide. Plastocyanin-like domains lie at 20-199 (ATRK…LLVC) and 207-343 (ERTQ…VDSC). The F5/8 type A 1 domain occupies 20–343 (ATRKYYLGAV…MEAYVKVDSC (324 aa)). N-linked (GlcNAc...) asparagine glycans are attached at residues asparagine 233 and asparagine 253. Tyrosine 359 and tyrosine 408 each carry sulfotyrosine. 2 consecutive Plastocyanin-like domains span residues 393-567 (KTWV…LLIC) and 577-724 (NQMM…VSSC). The 332-residue stretch at 393-724 (KTWVHYIAAE…MTALLKVSSC (332 aa)) folds into the F5/8 type A 2 domain. Asparagine 595 is a glycosylation site (N-linked (GlcNAc...) asparagine). Sulfotyrosine occurs at positions 731, 732, and 736. The segment covering 752-761 (PRSFSQNSRH) has biased composition (polar residues). 2 disordered regions span residues 752–774 (PRSFSQNSRHPSTKEKQLKATTT) and 828–865 (ADDHSRGAIERNKGPPEVASLRPELRHSEDREFTPEPE). Positions 754–1659 (SFSQNSRHPS…NPPVSKHHQR (906 aa)) are b. 2 stretches are compositionally biased toward basic and acidic residues: residues 828-841 (ADDHSRGAIERNKG) and 850-861 (PELRHSEDREFT). Residues asparagine 877, asparagine 921, asparagine 937, asparagine 938, asparagine 956, asparagine 1007, asparagine 1019, asparagine 1037, asparagine 1062, asparagine 1069, and asparagine 1080 are each glycosylated (N-linked (GlcNAc...) asparagine). Positions 1124-1147 (GKNSLSSEQRPSPKQLTSLGSEKS) are disordered. The span at 1125–1147 (KNSLSSEQRPSPKQLTSLGSEKS) shows a compositional bias: polar residues. N-linked (GlcNAc...) asparagine glycosylation is found at asparagine 1179, asparagine 1193, asparagine 1275, asparagine 1290, asparagine 1308, asparagine 1341, asparagine 1391, asparagine 1419, asparagine 1429, asparagine 1453, asparagine 1547, and asparagine 1618. Over residues 1302–1314 (TTRMSSNASQHVI) the composition is skewed to polar residues. Positions 1302-1326 (TTRMSSNASQHVITQRGKRSLKQPR) are disordered. The tract at residues 1592–1632 (KSQKKSQTNTAFKRKDTILPLGPCENNDSTAAINEGQDKPQ) is disordered. Residues tyrosine 1675 and tyrosine 1691 each carry the sulfotyrosine modification. Plastocyanin-like domains are found at residues 1705-1869 (KTRH…LLIC) and 1879-2032 (GRQV…SKKC). In terms of domain architecture, F5/8 type A 3 spans 1705–2032 (KTRHYFIAAV…TLFLVYSKKC (328 aa)). N-linked (GlcNAc...) asparagine glycosylation is present at asparagine 1821. 2 F5/8 type C domains span residues 2032-2180 (CQTP…LLGC) and 2185-2337 (CSMP…VLGC). Intrachain disulfides connect cysteine 2032/cysteine 2180 and cysteine 2185/cysteine 2337. N-linked (GlcNAc...) asparagine glycans are attached at residues asparagine 2129 and asparagine 2281.

The protein belongs to the multicopper oxidase family. As to quaternary structure, interacts with vWF. vWF binding is essential for the stabilization of F8 in circulation. In terms of processing, proteolytically cleaved by cathepsin CTSG to produce a partially activated form.

The protein resides in the secreted. It is found in the extracellular space. Factor VIII, along with calcium and phospholipid, acts as a cofactor for factor IXa when it converts factor X to the activated form, factor Xa. The sequence is that of Coagulation factor VIII (F8) from Canis lupus familiaris (Dog).